The primary structure comprises 318 residues: Thymidylate synthase (318 aa).

DUMP-binding positions include Arg25 and 180 to 181 (RR). The active-site Nucleophile is Cys200. DUMP contacts are provided by residues 220-223 (RSGD), Asn231, and 261-263 (HIY). A (6R)-5,10-methylene-5,6,7,8-tetrahydrofolate-binding site is contributed by Asp223. Residue Ala317 participates in (6R)-5,10-methylene-5,6,7,8-tetrahydrofolate binding.

It belongs to the thymidylate synthase family. Bacterial-type ThyA subfamily. In terms of assembly, homodimer.

The protein localises to the cytoplasm. It carries out the reaction dUMP + (6R)-5,10-methylene-5,6,7,8-tetrahydrofolate = 7,8-dihydrofolate + dTMP. It participates in pyrimidine metabolism; dTTP biosynthesis. Catalyzes the reductive methylation of 2'-deoxyuridine-5'-monophosphate (dUMP) to 2'-deoxythymidine-5'-monophosphate (dTMP) while utilizing 5,10-methylenetetrahydrofolate (mTHF) as the methyl donor and reductant in the reaction, yielding dihydrofolate (DHF) as a by-product. This enzymatic reaction provides an intracellular de novo source of dTMP, an essential precursor for DNA biosynthesis. This is Thymidylate synthase from Lactobacillus gasseri (strain ATCC 33323 / DSM 20243 / BCRC 14619 / CIP 102991 / JCM 1131 / KCTC 3163 / NCIMB 11718 / NCTC 13722 / AM63).